The chain runs to 155 residues: Small ribosomal subunit protein uS7cz/uS7cy (155 aa).

The protein belongs to the universal ribosomal protein uS7 family. Part of the 30S ribosomal subunit.

It is found in the plastid. It localises to the chloroplast. Functionally, one of the primary rRNA binding proteins, it binds directly to 16S rRNA where it nucleates assembly of the head domain of the 30S subunit. The sequence is that of Small ribosomal subunit protein uS7cz/uS7cy (rps7-A) from Pelargonium hortorum (Common geranium).